The following is a 1071-amino-acid chain: ATP-dependent helicase/deoxyribonuclease subunit B (1071 aa).

This sequence belongs to the helicase family. AddB/RexB type 2 subfamily. As to quaternary structure, heterodimer of AddA and RexB. Mg(2+) serves as cofactor.

Functionally, the heterodimer acts as both an ATP-dependent DNA helicase and an ATP-dependent, dual-direction single-stranded exonuclease. Recognizes the chi site generating a DNA molecule suitable for the initiation of homologous recombination. This subunit has 5' -&gt; 3' nuclease activity but not helicase activity. This chain is ATP-dependent helicase/deoxyribonuclease subunit B, found in Streptococcus pyogenes serotype M12 (strain MGAS2096).